A 715-amino-acid polypeptide reads, in one-letter code: Polyribonucleotide nucleotidyltransferase (715 aa).

Mg(2+) is bound by residues Asp491 and Asp497. Positions 558 to 617 (PKIMTMTINPEKIRDVIGPQGRVINKIIEETGVKIDIEQDGRVFIASINHEANLRAKQII) constitute a KH domain. The S1 motif domain maps to 627-695 (GQVYLGTVKR…DQGRVNLSRK (69 aa)).

It belongs to the polyribonucleotide nucleotidyltransferase family. It depends on Mg(2+) as a cofactor.

It is found in the cytoplasm. It carries out the reaction RNA(n+1) + phosphate = RNA(n) + a ribonucleoside 5'-diphosphate. In terms of biological role, involved in mRNA degradation. Catalyzes the phosphorolysis of single-stranded polyribonucleotides processively in the 3'- to 5'-direction. The sequence is that of Polyribonucleotide nucleotidyltransferase from Brevibacillus brevis (strain 47 / JCM 6285 / NBRC 100599).